The following is a 246-amino-acid chain: Putative 4'-phosphopantetheinyl transferase slr0495 (246 aa).

Asp110 and Glu156 together coordinate Mg(2+).

This sequence belongs to the P-Pant transferase superfamily. Gsp/Sfp/HetI/AcpT family. Mg(2+) serves as cofactor.

Its function is as follows. Probably transfers the 4'-phosphopantetheine moiety from coenzyme A (CoA) to a serine residue of a carrier protein domain. The sequence is that of Putative 4'-phosphopantetheinyl transferase slr0495 from Synechocystis sp. (strain ATCC 27184 / PCC 6803 / Kazusa).